Here is a 209-residue protein sequence, read N- to C-terminus: Uracil phosphoribosyltransferase (209 aa).

5-phospho-alpha-D-ribose 1-diphosphate contacts are provided by residues R79, R104, and 131 to 139 (DPMLATGVS). Uracil contacts are provided by residues I194 and 199-201 (GDA). Residue D200 coordinates 5-phospho-alpha-D-ribose 1-diphosphate.

This sequence belongs to the UPRTase family. Mg(2+) serves as cofactor.

It carries out the reaction UMP + diphosphate = 5-phospho-alpha-D-ribose 1-diphosphate + uracil. Its pathway is pyrimidine metabolism; UMP biosynthesis via salvage pathway; UMP from uracil: step 1/1. Its activity is regulated as follows. Allosterically activated by GTP. Catalyzes the conversion of uracil and 5-phospho-alpha-D-ribose 1-diphosphate (PRPP) to UMP and diphosphate. This chain is Uracil phosphoribosyltransferase, found in Thermotoga maritima (strain ATCC 43589 / DSM 3109 / JCM 10099 / NBRC 100826 / MSB8).